A 300-amino-acid chain; its full sequence is UPF0282 protein TON_1363 (300 aa).

Belongs to the UPF0282 family.

The protein is UPF0282 protein TON_1363 of Thermococcus onnurineus (strain NA1).